Consider the following 597-residue polypeptide: Lipoprotein LpqB (597 aa).

A signal peptide spans 1-28; it reads MTPGRRSALLSRSVCGAIVLAVLVTVSG. Cys-29 carries N-palmitoyl cysteine lipidation. The S-diacylglycerol cysteine moiety is linked to residue Cys-29. The span at 38–51 shows a compositional bias: polar residues; it reads PQAIGTINRDSPGS. The tract at residues 38–58 is disordered; the sequence is PQAIGTINRDSPGSSVAAPAP.

Belongs to the LpqB lipoprotein family.

The protein resides in the cell membrane. The protein is Lipoprotein LpqB of Rhodococcus jostii (strain RHA1).